The following is a 953-amino-acid chain: ABC transporter A family member 11 (953 aa).

6 helical membrane passes run Cys33–Met53, Gly230–Val250, Thr277–Phe297, Phe307–Ala327, Val341–Pro361, and Val417–Leu437. Positions Val519 to Ser764 constitute an ABC transporter domain. Gly565–Thr572 serves as a coordination point for ATP.

Belongs to the ABC transporter superfamily. ABCA family. CPR flippase (TC 3.A.1.211) subfamily.

The protein resides in the membrane. This chain is ABC transporter A family member 11 (ABCA11), found in Arabidopsis thaliana (Mouse-ear cress).